A 484-amino-acid polypeptide reads, in one-letter code: Glutamyl-tRNA(Gln) amidotransferase subunit A (484 aa).

Catalysis depends on charge relay system residues Lys77 and Ser152. Residue Ser176 is the Acyl-ester intermediate of the active site.

This sequence belongs to the amidase family. GatA subfamily. Heterotrimer of A, B and C subunits.

The enzyme catalyses L-glutamyl-tRNA(Gln) + L-glutamine + ATP + H2O = L-glutaminyl-tRNA(Gln) + L-glutamate + ADP + phosphate + H(+). Its function is as follows. Allows the formation of correctly charged Gln-tRNA(Gln) through the transamidation of misacylated Glu-tRNA(Gln) in organisms which lack glutaminyl-tRNA synthetase. The reaction takes place in the presence of glutamine and ATP through an activated gamma-phospho-Glu-tRNA(Gln). The sequence is that of Glutamyl-tRNA(Gln) amidotransferase subunit A from Lacticaseibacillus paracasei (strain ATCC 334 / BCRC 17002 / CCUG 31169 / CIP 107868 / KCTC 3260 / NRRL B-441) (Lactobacillus paracasei).